Here is a 362-residue protein sequence, read N- to C-terminus: MNIKSLLLGSAAALVAASGAQAADAIVAPEPEAVEYVRVCDAYGAGYFYIPGTETCLRVHGYVRYDVKGGDDVYTGSDRKGWDKSARFALRVSTGSETELGTLKTFTELRFNYAANNSGVDGKYGNETSSGTVMEFAYIQLGGLRVGIDESEFHTFTGYLGDVINDDVISAGSYRTGKISYTFTGGNGFSAVIALEQGGDNDGGYTGTTNYHIDGYMPDVVGGLKYAGGWGSIAGVVAYDSVIEEWAAKVRGDVNITDQFSVWLQGAYSSAATPDQNYGQWGGDWAVWGGLKYQATQKAAFNLQAAHDDWGKTAVTANVAYELVPGFTVTPEVSYTKFGGEWKNTVAEDNAWGGIVRFQRSF.

A signal peptide spans 1 to 22; it reads MNIKSLLLGSAAALVAASGAQA.

It belongs to the alphaproteobacteria porin family. In terms of assembly, homotrimer.

The protein resides in the cell outer membrane. In terms of biological role, forms passive diffusion pores that allow small molecular weight hydrophilic materials across the outer membrane. This is Porin Omp2b (omp2b) from Brucella canis (strain ATCC 23365 / NCTC 10854 / RM-666).